Reading from the N-terminus, the 369-residue chain is Transmembrane protein 144 homolog A (369 aa).

10 helical membrane-spanning segments follow: residues Val-6–Val-26, Leu-35–Ile-55, Pro-63–Ile-83, Leu-85–Phe-105, Asp-122–Ile-142, Val-221–Met-241, Ile-256–Ala-276, Thr-288–Ile-308, Gly-318–Phe-338, and Leu-347–Ser-367.

Belongs to the TMEM144 family.

It localises to the membrane. In Dictyostelium discoideum (Social amoeba), this protein is Transmembrane protein 144 homolog A (tmem144A).